Here is a 2167-residue protein sequence, read N- to C-terminus: RNA editing associated helicase 2 (2167 aa).

A mitochondrion-targeting transit peptide spans 1–30 (MRAIRLTVACRYLGPFRSVTLSPVVLPVRL). Disordered regions lie at residues 503–593 (RARG…DEAT) and 937–969 (ENAT…PTNV). Over residues 532 to 541 (SSTQTPSSST) the composition is skewed to low complexity. The 72-residue stretch at 1024-1095 (DAKTVLQRYC…AMHALALLRR (72 aa)) folds into the DRBM domain. The region spanning 1348 to 1513 (LRAISSNQIV…FGNAPIINVE (166 aa)) is the Helicase ATP-binding domain. Residue 1361 to 1368 (GTTGCGKT) participates in ATP binding. The Important for binding to gRNA signature appears at 1366 to 1367 (GK). Positions 1460–1463 (DEIH) match the DEAH box motif. Residues 1585-1762 (AIDHAVRSLD…SLCLQILALD (178 aa)) form the Helicase C-terminal domain. Positions 2132-2167 (IIEPCTEPKGGSSEAEKTHVNSSHTPTTSAEAGGDS) are disordered. The segment covering 2151–2161 (VNSSHTPTTSA) has biased composition (polar residues).

Belongs to the DEAD box helicase family. DEAH subfamily. Component of the REH2-associated complex (REH2C) composed of helicase REH2, associated factors H2F1 and H2F2, and mRNAs at various editing stages; the formation of the complex is RNA-independent. Within the complex, interacts with H2F1; the interaction is direct. Interacts transiently, in a RNA-dependent manner, with various editing complexes including the RNA editing core (RECC) complex, the gRNA-binding (GRBC) complex (also known as the MRB1 complex) and the RNA editing mediator (REMC) complex. Interacts with GAP1/GRBC2 via RNA forming a variant of the GRBC complex known as REH2-GRBC complex. Interacts with mitochondrial ribosomes.

It is found in the mitochondrion. The catalysed reaction is ATP + H2O = ADP + phosphate + H(+). In terms of biological role, ATP-dependent RNA helicase that unwinds RNA in a 3' to 5' direction and that plays an important role in mitochondrial mRNA editing, a process involving the addition and deletion of uridine (U) nucleotides in the pre-mRNA. As part of the RET2-containing gRNA-binding (RET2-GRBC) complex, acts as a scaffold for the assembly of mRNA-gRNA hybrids and the recruitment of the RNA editing core (RECC) complex. Regulates several steps of mRNA editing by the MRBC3010/GRBC6 containing gRNA-binding (MRBC3010-GRBC) complex including loading of unedited mRNA, editing in the first sequence block and subsequent editing progression across multiple sequence blocks. Also, regulates the RNA substrate content of the MRBC3010-GRBC complex as well as the association of this complex with mitoribosomes. This Trypanosoma brucei brucei (strain 927/4 GUTat10.1) protein is RNA editing associated helicase 2.